A 38-amino-acid chain; its full sequence is Photosystem II reaction center protein L (38 aa).

A helical membrane pass occupies residues 17 to 37; it reads SLFWGLLLIFVLAVLFSSYFF.

Belongs to the PsbL family. In terms of assembly, PSII is composed of 1 copy each of membrane proteins PsbA, PsbB, PsbC, PsbD, PsbE, PsbF, PsbH, PsbI, PsbJ, PsbK, PsbL, PsbM, PsbT, PsbX, PsbY, PsbZ, Psb30/Ycf12, at least 3 peripheral proteins of the oxygen-evolving complex and a large number of cofactors. It forms dimeric complexes.

It localises to the plastid. The protein localises to the chloroplast thylakoid membrane. One of the components of the core complex of photosystem II (PSII). PSII is a light-driven water:plastoquinone oxidoreductase that uses light energy to abstract electrons from H(2)O, generating O(2) and a proton gradient subsequently used for ATP formation. It consists of a core antenna complex that captures photons, and an electron transfer chain that converts photonic excitation into a charge separation. This subunit is found at the monomer-monomer interface and is required for correct PSII assembly and/or dimerization. This chain is Photosystem II reaction center protein L, found in Porphyra purpurea (Red seaweed).